A 375-amino-acid polypeptide reads, in one-letter code: Chaperone protein DnaJ (375 aa).

Residues 5–70 (DFYETLGVAK…QKRAAYDRYG (66 aa)) enclose the J domain. The CR-type zinc-finger motif lies at 136-214 (GKTAQIRVPT…CHGQGRVTEE (79 aa)). Zn(2+)-binding residues include Cys-149, Cys-152, Cys-166, Cys-169, Cys-188, Cys-191, Cys-202, and Cys-205. CXXCXGXG motif repeat units follow at residues 149–156 (CDVCSGSG), 166–173 (CGTCQGTG), 188–195 (CPTCHGRG), and 202–209 (CPKCHGQG).

The protein belongs to the DnaJ family. In terms of assembly, homodimer. It depends on Zn(2+) as a cofactor.

The protein resides in the cytoplasm. Participates actively in the response to hyperosmotic and heat shock by preventing the aggregation of stress-denatured proteins and by disaggregating proteins, also in an autonomous, DnaK-independent fashion. Unfolded proteins bind initially to DnaJ; upon interaction with the DnaJ-bound protein, DnaK hydrolyzes its bound ATP, resulting in the formation of a stable complex. GrpE releases ADP from DnaK; ATP binding to DnaK triggers the release of the substrate protein, thus completing the reaction cycle. Several rounds of ATP-dependent interactions between DnaJ, DnaK and GrpE are required for fully efficient folding. Also involved, together with DnaK and GrpE, in the DNA replication of plasmids through activation of initiation proteins. The protein is Chaperone protein DnaJ of Rhizobium etli (strain ATCC 51251 / DSM 11541 / JCM 21823 / NBRC 15573 / CFN 42).